Consider the following 338-residue polypeptide: Ketol-acid reductoisomerase (NADP(+)) (338 aa).

One can recognise a KARI N-terminal Rossmann domain in the interval 1–181 (MKVFYDKDCD…GGGRAGIIET (181 aa)). Residues 24 to 27 (YGSQ), arginine 47, and serine 52 contribute to the NADP(+) site. The active site involves histidine 107. Residue glycine 133 participates in NADP(+) binding. Residues 182–327 (NFREETETDL…GKLRAMMPWI (146 aa)) form the KARI C-terminal knotted domain. Mg(2+)-binding residues include aspartate 190, glutamate 194, glutamate 226, and glutamate 230. Serine 251 contacts substrate.

Belongs to the ketol-acid reductoisomerase family. Requires Mg(2+) as cofactor.

The enzyme catalyses (2R)-2,3-dihydroxy-3-methylbutanoate + NADP(+) = (2S)-2-acetolactate + NADPH + H(+). It catalyses the reaction (2R,3R)-2,3-dihydroxy-3-methylpentanoate + NADP(+) = (S)-2-ethyl-2-hydroxy-3-oxobutanoate + NADPH + H(+). The protein operates within amino-acid biosynthesis; L-isoleucine biosynthesis; L-isoleucine from 2-oxobutanoate: step 2/4. It participates in amino-acid biosynthesis; L-valine biosynthesis; L-valine from pyruvate: step 2/4. Functionally, involved in the biosynthesis of branched-chain amino acids (BCAA). Catalyzes an alkyl-migration followed by a ketol-acid reduction of (S)-2-acetolactate (S2AL) to yield (R)-2,3-dihydroxy-isovalerate. In the isomerase reaction, S2AL is rearranged via a Mg-dependent methyl migration to produce 3-hydroxy-3-methyl-2-ketobutyrate (HMKB). In the reductase reaction, this 2-ketoacid undergoes a metal-dependent reduction by NADPH to yield (R)-2,3-dihydroxy-isovalerate. This chain is Ketol-acid reductoisomerase (NADP(+)), found in Bordetella pertussis (strain Tohama I / ATCC BAA-589 / NCTC 13251).